The sequence spans 333 residues: MSAAVSRHISVLGREAVEFLAPRAGGIYVDATFGAGGYSRRILAVAGARVIGIDRDRTAIAEAFDLVEQAEGRLTLVQDRFSQLDEVCASQNAPQVDGIVMDIGVSSMQLDRAERGFSFRQDGPLDMRMGQEGASAADVVAVASEKDLANIIYIFGEERHSRAVARAIVRARQEKPILTTKVLADIVASVVHTRPNDIHPATRTFQALRIFVNEELDELQSALHASERTLKPGGRLVVVTFHSLEDRIVKNFINARASRGGGSRHMPDVERTAPSFEILTKRPVVADENEIAANPRARSAKLRAAERTANASHDADTSFDWPTLRTVMKGGRA.

S-adenosyl-L-methionine is bound by residues 36 to 38 (GGY), aspartate 54, phenylalanine 81, aspartate 102, and glutamine 109.

Belongs to the methyltransferase superfamily. RsmH family.

Its subcellular location is the cytoplasm. It carries out the reaction cytidine(1402) in 16S rRNA + S-adenosyl-L-methionine = N(4)-methylcytidine(1402) in 16S rRNA + S-adenosyl-L-homocysteine + H(+). Its function is as follows. Specifically methylates the N4 position of cytidine in position 1402 (C1402) of 16S rRNA. This chain is Ribosomal RNA small subunit methyltransferase H, found in Afipia carboxidovorans (strain ATCC 49405 / DSM 1227 / KCTC 32145 / OM5) (Oligotropha carboxidovorans).